A 173-amino-acid polypeptide reads, in one-letter code: NADH-ubiquinone oxidoreductase chain 6 (173 aa).

A run of 4 helical transmembrane segments spans residues 12–32, 47–67, 94–114, and 142–162; these read VFWL…VSLV, GSFL…VIFA, VVLA…GECG, and GALM…LVLV.

This sequence belongs to the complex I subunit 6 family.

The protein resides in the mitochondrion membrane. It catalyses the reaction a ubiquinone + NADH + 5 H(+)(in) = a ubiquinol + NAD(+) + 4 H(+)(out). Core subunit of the mitochondrial membrane respiratory chain NADH dehydrogenase (Complex I) that is believed to belong to the minimal assembly required for catalysis. Complex I functions in the transfer of electrons from NADH to the respiratory chain. The immediate electron acceptor for the enzyme is believed to be ubiquinone. In Pelomedusa subrufa (African side-necked turtle), this protein is NADH-ubiquinone oxidoreductase chain 6 (MT-ND6).